Consider the following 1849-residue polypeptide: SH3 and multiple ankyrin repeat domains protein 2 (1849 aa).

The disordered stretch occupies residues 1–33; the sequence is MPRSPTSSEDEMAQSFSDYSVGSESDSSKEETI. Low complexity predominate over residues 15 to 25; it reads SFSDYSVGSES. ANK repeat units follow at residues 196–226, 230–259, 263–293, 297–326, 330–359, and 363–393; these read TGET…HLDF, DGMT…SPDY, YGLT…TVCC, NGWH…DMSA, SGNT…NKEL, and NSQT…DIVP. The interval 451 to 493 is disordered; it reads QQMPSKPEGAAKTIGSYVPGPRSRSPSLNRLGGAGEDGKRPQP. An SH3 domain is found at 526–585; the sequence is VPGRLFVAVKPYQPQVDGEIPLHRGDRVKVLSIGEGGFWEGSARGHIGWFPAECVEEVQC. The PDZ domain maps to 626-720; the sequence is TVVLQKKDNE…HLVLKVVTVT (95 aa). Basic and acidic residues predominate over residues 764–774; the sequence is SVRKKKDKPEE. The interval 764–808 is disordered; that stretch reads SVRKKKDKPEEIVPASKPSRAAENMAVEPRVATIKQRPSSRCFPA. Residue Ser-831 is modified to Phosphoserine. Phosphothreonine is present on Thr-860. The interval 878–910 is disordered; it reads LSMPDTSEDIPPPPQSVPPSPPPPSPTTYNCPK. Pro residues predominate over residues 887–903; sequence IPPPPQSVPPSPPPPSP. Position 960 is a phosphoserine (Ser-960). 4 disordered regions span residues 1013–1293, 1328–1371, 1432–1526, and 1574–1594; these read LVKQ…RKGD, LQEE…TTVP, PALS…GGEN, and SFVI…PGMA. A compositionally biased stretch (low complexity) spans 1040–1052; the sequence is STSSSGKSSQGSS. The segment covering 1086-1097 has biased composition (basic and acidic residues); it reads VRDREKRLEARR. Phosphoserine is present on Ser-1099. Acidic residues predominate over residues 1128-1138; the sequence is EEGDFADEDSA. 3 stretches are compositionally biased toward low complexity: residues 1159–1170, 1181–1199, and 1208–1221; these read GGAEASAPGEAG, GPES…AGPG, and RLLD…LALS. Residues 1274-1293 show a composition bias toward basic and acidic residues; sequence RRQETENKYETDLGRDRKGD. Thr-1278 carries the post-translational modification Phosphothreonine. Residues 1327 to 1333 carry the SH3-binding motif; it reads ALQEEDE. Over residues 1343 to 1357 the composition is skewed to low complexity; that stretch reads SSPSEVPEGVSETEG. Residues 1445 to 1460 show a composition bias toward polar residues; it reads TPQSPSLNSSQPTNSA. The span at 1494–1505 shows a compositional bias: basic and acidic residues; sequence VDSRSSSDHHLE. Over residues 1506 to 1522 the composition is skewed to low complexity; the sequence is TTSTISTVSSISTLSSE. Positions 1577 to 1588 are enriched in pro residues; the sequence is IPPPAPPPPPGS. Thr-1667 is a glycosylation site (O-linked (GlcNAc) threonine). Residues 1678–1692 are compositionally biased toward polar residues; the sequence is FTVRPGTSQPITLQS. The interval 1678-1776 is disordered; the sequence is FTVRPGTSQP…SILQQPISNK (99 aa). Ser-1709 and Ser-1713 each carry phosphoserine. Low complexity-rich tracts occupy residues 1721 to 1738 and 1760 to 1774; these read TLPA…PALS and RSRS…QPIS. One can recognise an SAM domain in the interval 1786–1849; it reads WTKPDVADWL…ERALKQLLDR (64 aa).

It belongs to the SHANK family. Is part of a complex with DLG4/PSD-95 and DLGAP1/GKAP. Interacts with CTTN/cortactin SH3 domain, DLGAP1/GKAP and alpha-latrotoxin receptor 1. Interacts with DNM2, DBNL, GRID2, BAIAP2, SLC9A3, PLCB3 and CFTR. Interacts (via proline-rich region) with PDE4D. Interacts with ABI1 (via SH3 domain). In terms of tissue distribution, isoform 3 is present in epithelial colonic cells (at protein level).

The protein resides in the apical cell membrane. It is found in the cytoplasm. It localises to the synapse. The protein localises to the postsynaptic density. Its subcellular location is the cell projection. The protein resides in the growth cone. It is found in the dendritic spine. Functionally, seems to be an adapter protein in the postsynaptic density (PSD) of excitatory synapses that interconnects receptors of the postsynaptic membrane including NMDA-type and metabotropic glutamate receptors, and the actin-based cytoskeleton. May play a role in the structural and functional organization of the dendritic spine and synaptic junction. This Homo sapiens (Human) protein is SH3 and multiple ankyrin repeat domains protein 2 (SHANK2).